The primary structure comprises 181 residues: Dual-action ribosomal maturation protein DarP (181 aa).

It belongs to the DarP family.

It localises to the cytoplasm. Member of a network of 50S ribosomal subunit biogenesis factors which assembles along the 30S-50S interface, preventing incorrect 23S rRNA structures from forming. Promotes peptidyl transferase center (PTC) maturation. This chain is Dual-action ribosomal maturation protein DarP, found in Actinobacillus succinogenes (strain ATCC 55618 / DSM 22257 / CCUG 43843 / 130Z).